We begin with the raw amino-acid sequence, 238 residues long: Probable transcriptional regulatory protein YeeN (238 aa).

It belongs to the TACO1 family. YeeN subfamily.

The protein resides in the cytoplasm. This chain is Probable transcriptional regulatory protein YeeN, found in Escherichia coli O157:H7.